We begin with the raw amino-acid sequence, 443 residues long: uncharacterized protein (443 aa).

Residues His-164 and Asp-386 each act as proton acceptor in the active site.

This sequence belongs to the plant acyltransferase family.

This is an uncharacterized protein from Arabidopsis thaliana (Mouse-ear cress).